A 435-amino-acid chain; its full sequence is 5'-deoxyadenosine deaminase (435 aa).

2 residues coordinate Zn(2+): His-64 and His-66. Substrate is bound by residues Glu-93 and His-185. His-212 lines the Zn(2+) pocket. Residues Glu-215 and Asp-300 each contribute to the substrate site. Asp-300 lines the Zn(2+) pocket.

The protein belongs to the metallo-dependent hydrolases superfamily. MTA/SAH deaminase family. As to quaternary structure, homotetramer. It depends on Zn(2+) as a cofactor.

The enzyme catalyses 5'-deoxyadenosine + H2O + H(+) = 5'-deoxyinosine + NH4(+). The catalysed reaction is S-adenosyl-L-homocysteine + H2O + H(+) = S-inosyl-L-homocysteine + NH4(+). It catalyses the reaction S-methyl-5'-thioadenosine + H2O + H(+) = S-methyl-5'-thioinosine + NH4(+). It carries out the reaction adenosine + H2O + H(+) = inosine + NH4(+). It functions in the pathway amino-acid biosynthesis; S-adenosyl-L-methionine biosynthesis. Its function is as follows. Catalyzes the deamination of three SAM-derived enzymatic products, namely 5'-deoxyadenosine, S-adenosyl-L-homocysteine, and 5'-methylthioadenosine, to produce the inosine analogs. Can also deaminate adenosine. The preferred substrate for this enzyme is 5'-deoxyadenosine, but all these substrates are efficiently deaminated. Likely functions in a S-adenosyl-L-methionine (SAM) recycling pathway from S-adenosyl-L-homocysteine (SAH) produced from SAM-dependent methylation reactions. May also be involved in the recycling of 5'-deoxyadenosine, whereupon the 5'-deoxyribose moiety of 5'-deoxyinosine is further metabolized to deoxyhexoses used for the biosynthesis of aromatic amino acids in methanogens. The polypeptide is 5'-deoxyadenosine deaminase (Methanobrevibacter smithii (strain ATCC 35061 / DSM 861 / OCM 144 / PS)).